The sequence spans 56 residues: Potassium channel toxin alpha-KTx 9.2 (56 aa).

An N-terminal signal peptide occupies residues 1–28 (MSRLFTLVLIVLAMNVMMAIISDPVVEA). Cystine bridges form between Cys31/Cys47, Cys34/Cys52, and Cys38/Cys54.

Expressed by the venom gland.

The protein localises to the secreted. In terms of biological role, blocks small conductance calcium-activated potassium channels (KCNN, SK). Low toxicity by intracerebroventricular injection into mice. The protein is Potassium channel toxin alpha-KTx 9.2 of Olivierus martensii (Manchurian scorpion).